Consider the following 168-residue polypeptide: Small ribosomal subunit protein uS5 (168 aa).

The region spanning 13–76 (LEENVVAINR…EDAKRKLITV (64 aa)) is the S5 DRBM domain.

Belongs to the universal ribosomal protein uS5 family. Part of the 30S ribosomal subunit. Contacts proteins S4 and S8.

Functionally, with S4 and S12 plays an important role in translational accuracy. Located at the back of the 30S subunit body where it stabilizes the conformation of the head with respect to the body. The sequence is that of Small ribosomal subunit protein uS5 from Leuconostoc mesenteroides subsp. mesenteroides (strain ATCC 8293 / DSM 20343 / BCRC 11652 / CCM 1803 / JCM 6124 / NCDO 523 / NBRC 100496 / NCIMB 8023 / NCTC 12954 / NRRL B-1118 / 37Y).